Here is a 546-residue protein sequence, read N- to C-terminus: Beta-amylase (546 aa).

The first 30 residues, 1–30 (MKNQFQYCCIVILSVVMLFVSLLIPQASSA), serve as a signal peptide directing secretion. D79 serves as a coordination point for substrate. Positions 86, 90, and 91 each coordinate Ca(2+). Residues H119 and D127 each contribute to the substrate site. Cysteines 121 and 129 form a disulfide. Ca(2+)-binding residues include E171 and E174. The Proton donor role is filled by E202. Substrate contacts are provided by K317, H322, and T360. The active-site Proton acceptor is the E397. Residues 398–399 (NA) and R427 each bind substrate. In terms of domain architecture, CBM20 spans 444–546 (LLGVTPVMQT…LKTTSHTSSW (103 aa)).

The protein belongs to the glycosyl hydrolase 14 family. Monomer. It depends on Ca(2+) as a cofactor.

The enzyme catalyses Hydrolysis of (1-&gt;4)-alpha-D-glucosidic linkages in polysaccharides so as to remove successive maltose units from the non-reducing ends of the chains.. The sequence is that of Beta-amylase (spoII) from Bacillus cereus.